The chain runs to 118 residues: MSIKYSNKINKIRTFALSLVFIGLFIAYLGVFFRENIIIMTTFMMVGFLAVIASTVVYFWIGMLSTKTVQIICPSCDKPTKMLGRVDACMHCNQPLTMDRDLEGKEFDEKYNKKSYKS.

2 consecutive transmembrane segments (helical) span residues 12–32 and 43–63; these read IRTFALSLVFIGLFIAYLGVF and FMMVGFLAVIASTVVYFWIGM.

This sequence belongs to the UPF0295 family.

The protein localises to the cell membrane. The chain is UPF0295 protein BA_0538/GBAA_0538/BAS0506 from Bacillus anthracis.